The following is a 130-amino-acid chain: Large ribosomal subunit protein bL17 (130 aa).

This sequence belongs to the bacterial ribosomal protein bL17 family. Part of the 50S ribosomal subunit. Contacts protein L32.

The chain is Large ribosomal subunit protein bL17 from Paraburkholderia xenovorans (strain LB400).